The sequence spans 276 residues: ARL14 effector protein (276 aa).

The tract at residues 158 to 177 (KQTEFAPEGGKREKRKLTKA) is disordered. Lys-176 is covalently cross-linked (Glycyl lysine isopeptide (Lys-Gly) (interchain with G-Cter in SUMO2)). A phosphoserine mark is found at Ser-182 and Ser-266.

Interacts with ARL14 and MYO1E.

The protein localises to the cytoplasm. Its function is as follows. Through its interaction with ARL14 and MYO1E, may connect MHC class II-containing cytoplasmic vesicles to the actin network and hence controls the movement of these vesicles along the actin cytoskeleton in dendritic cells. The chain is ARL14 effector protein (Arl14ep) from Mus musculus (Mouse).